The chain runs to 479 residues: ATP synthase subunit beta (479 aa).

An ATP-binding site is contributed by glycine 168 to threonine 175.

It belongs to the ATPase alpha/beta chains family. As to quaternary structure, F-type ATPases have 2 components, CF(1) - the catalytic core - and CF(0) - the membrane proton channel. CF(1) has five subunits: alpha(3), beta(3), gamma(1), delta(1), epsilon(1). CF(0) has three main subunits: a(1), b(2) and c(9-12). The alpha and beta chains form an alternating ring which encloses part of the gamma chain. CF(1) is attached to CF(0) by a central stalk formed by the gamma and epsilon chains, while a peripheral stalk is formed by the delta and b chains.

It localises to the cell membrane. The catalysed reaction is ATP + H2O + 4 H(+)(in) = ADP + phosphate + 5 H(+)(out). Its function is as follows. Produces ATP from ADP in the presence of a proton gradient across the membrane. The catalytic sites are hosted primarily by the beta subunits. This is ATP synthase subunit beta from Frankia alni (strain DSM 45986 / CECT 9034 / ACN14a).